The following is a 208-amino-acid chain: NAD-dependent protein deacylase (208 aa).

The Deacetylase sirtuin-type domain maps to 1-208 (MKPICVVLSG…NTGFNPVTGW (208 aa)). 10 to 29 (GAGISAESGIPTYRAEDGLW) contributes to the NAD(+) binding site. Positions 54 and 57 each coordinate substrate. NAD(+) is bound at residue 87–90 (QNVE). The active-site Proton acceptor is the His105. NAD(+) is bound by residues 170–172 (GTS) and 197–199 (NPN).

Belongs to the sirtuin family. Class III subfamily.

The protein resides in the cytoplasm. The enzyme catalyses N(6)-acetyl-L-lysyl-[protein] + NAD(+) + H2O = 2''-O-acetyl-ADP-D-ribose + nicotinamide + L-lysyl-[protein]. It catalyses the reaction N(6)-succinyl-L-lysyl-[protein] + NAD(+) + H2O = 2''-O-succinyl-ADP-D-ribose + nicotinamide + L-lysyl-[protein]. In terms of biological role, NAD-dependent lysine deacetylase and desuccinylase that specifically removes acetyl and succinyl groups on target proteins. Modulates the activities of several proteins which are inactive in their acylated form. The sequence is that of NAD-dependent protein deacylase from Aggregatibacter actinomycetemcomitans (Actinobacillus actinomycetemcomitans).